Reading from the N-terminus, the 331-residue chain is MKQTVYIASPESQQIHVWNLNHDGTLTLTQVVDVPGQVQPMVVSPDKRYLYVGVRPEFRVLAYRIAPDDGALTFAAESALPGSPTHISTDHQGRFVFVGSYNAGSVSVTRLEDGLPVEVVDVVEGLDGCHSANITPDNRTLWVPALKQDRICLFTVSDDGYLAAQDPAEVTTVEGAGPRHMVFHPNEQYAYCVNELNSSVDVWELKDPHGNIECVQTLDMMPADFSDTRWAADIHITPDGRHLYACDRTASLITVFSVSEDGSVLTKEGYQSTETQPRGFNVDHSGKYLIAAGQKSHHIAVYEIHGEQGLLTEKGRYAVGQGPMWVVVNAH.

K287 is modified (N6-acetyllysine).

It belongs to the cycloisomerase 2 family.

The enzyme catalyses 6-phospho-D-glucono-1,5-lactone + H2O = 6-phospho-D-gluconate + H(+). It participates in carbohydrate degradation; pentose phosphate pathway; D-ribulose 5-phosphate from D-glucose 6-phosphate (oxidative stage): step 2/3. Its function is as follows. Catalyzes the hydrolysis of 6-phosphogluconolactone to 6-phosphogluconate. The sequence is that of 6-phosphogluconolactonase from Escherichia fergusonii (strain ATCC 35469 / DSM 13698 / CCUG 18766 / IAM 14443 / JCM 21226 / LMG 7866 / NBRC 102419 / NCTC 12128 / CDC 0568-73).